The following is a 409-amino-acid chain: MTQTNFRSGPDANGLFGSFGGRYVAETLMPLVLDLNREYEAAKADPEFIKEMAYFQRDYVGRPNPLYFAERLTEFCGGAKIYFKREELNHTGAHKINNCIGQVLLAKRMGKKRLIAETGAGMHGVATATVAARFGLPCVIYMGATDIERQQANVFRMRLLGAEIVPVTSGTGTLKDAMNEALRDWVTNVDDTFYLIGTVAGPHPYPAMVRDFQAIIGKETKEQMLEKEGRLPDSLVACVGGGSNAMGLFHPFLDDASVEIIGVEAGGHGVSTDKHAASLNGGVPGVLHGNRTYLLQDGDGQITDAHSISAGLDYPGIGPEHAFLHEVKRVEYVSITDDEALDAFHQCCLLEGIIPALETAHALAEAMKRATNLRDDHLMVVCLSGRGDKDMQTVMNHMAAAEHTQEQLV.

Lys95 carries the N6-(pyridoxal phosphate)lysine modification.

It belongs to the TrpB family. Tetramer of two alpha and two beta chains. It depends on pyridoxal 5'-phosphate as a cofactor.

The enzyme catalyses (1S,2R)-1-C-(indol-3-yl)glycerol 3-phosphate + L-serine = D-glyceraldehyde 3-phosphate + L-tryptophan + H2O. It participates in amino-acid biosynthesis; L-tryptophan biosynthesis; L-tryptophan from chorismate: step 5/5. The beta subunit is responsible for the synthesis of L-tryptophan from indole and L-serine. This chain is Tryptophan synthase beta chain, found in Pseudomonas syringae pv. syringae (strain B728a).